A 477-amino-acid chain; its full sequence is Erythritol/L-threitol-binding protein (477 aa).

Positions 1-38 (MMSRESQPGLHRQLSRRNMLAAMGLAGAAAVSLPVLSA) form a signal peptide, tat-type signal.

Belongs to the bacterial solute-binding protein 1 family. In terms of processing, predicted to be exported by the Tat system. The position of the signal peptide cleavage has not been experimentally proven.

Functionally, part of an ABC transporter complex involved in erythritol/L-threitol import. Binds erythritol and L-threitol. Functions in the transport for the degradation pathways of erythritol and L-threitol, that allow M.smegmatis to grow on these compounds as the sole carbon source. The sequence is that of Erythritol/L-threitol-binding protein from Mycolicibacterium smegmatis (strain ATCC 700084 / mc(2)155) (Mycobacterium smegmatis).